The primary structure comprises 393 residues: S-adenosylmethionine synthase (393 aa).

Residue His-16 participates in ATP binding. Position 18 (Asp-18) interacts with Mg(2+). A K(+)-binding site is contributed by Glu-44. 2 residues coordinate L-methionine: Glu-57 and Gln-100. The tract at residues 100-110 is flexible loop; the sequence is QSNDIAQGVDH. Residues 167-169, 238-239, Asp-247, 253-254, Ala-270, and Lys-274 contribute to the ATP site; these read DAK, RF, and RK. Residue Asp-247 participates in L-methionine binding. An L-methionine-binding site is contributed by Lys-278.

It belongs to the AdoMet synthase family. In terms of assembly, homotetramer; dimer of dimers. Mg(2+) serves as cofactor. K(+) is required as a cofactor.

It is found in the cytoplasm. The catalysed reaction is L-methionine + ATP + H2O = S-adenosyl-L-methionine + phosphate + diphosphate. It functions in the pathway amino-acid biosynthesis; S-adenosyl-L-methionine biosynthesis; S-adenosyl-L-methionine from L-methionine: step 1/1. Functionally, catalyzes the formation of S-adenosylmethionine (AdoMet) from methionine and ATP. The overall synthetic reaction is composed of two sequential steps, AdoMet formation and the subsequent tripolyphosphate hydrolysis which occurs prior to release of AdoMet from the enzyme. The polypeptide is S-adenosylmethionine synthase (Acidovorax sp. (strain JS42)).